Consider the following 593-residue polypeptide: SPI-1 type 3 secretion system translocon protein SctE (593 aa).

Coiled-coil stretches lie at residues 151–208 (DTAK…ATDA) and 287–314 (EGRQAEMEKKSAEFQEETRKAEETNRIM). 2 consecutive transmembrane segments (helical) span residues 330–350 (VVAAVFTGGASLALAAVGLAV) and 409–429 (IVGAIVAAIAMVAVIVVVAVV).

This sequence belongs to the SctE/SipB/YopB family. In terms of assembly, the core secretion machinery of the T3SS is composed of approximately 20 different proteins, including cytoplasmic components, a base, an export apparatus and a needle. This subunit is involved in the formation of a pore, called the translocon, in host membrane.

It localises to the secreted. Its subcellular location is the host membrane. The protein localises to the host cell. In terms of biological role, component of the type III secretion system 1 (SPI-1 T3SS), also called injectisome, which is used to inject bacterial effector proteins into eukaryotic host cells. SipB/SctE1 and SipC/SctB are inserted into the host membrane where they form a pore and allow the translocation of effector proteins into the cytosol of target cells. Its function is as follows. Induces macrophage apoptosis either by binding and activating the proapoptotic enzyme caspase-1 (caspase-1 dependent), resulting in the release of interleukin-1 beta active form, or by disrupting mitochondria and inducing autophagy (caspase-1 independent). The former is dependent of its membrane-fusion activity. This Salmonella typhi protein is SPI-1 type 3 secretion system translocon protein SctE.